The primary structure comprises 359 residues: Molybdenum import ATP-binding protein ModC (359 aa).

The 229-residue stretch at 1–229 (MLELNFSQQL…SALRPWLQRE (229 aa)) folds into the ABC transporter domain. 31–38 (GLSGAGKT) serves as a coordination point for ATP. One can recognise a Mop domain in the interval 289 to 354 (SSSIRNILPV…IKSVSFNRQN (66 aa)).

This sequence belongs to the ABC transporter superfamily. Molybdate importer (TC 3.A.1.8) family. The complex is composed of two ATP-binding proteins (ModC), two transmembrane proteins (ModB) and a solute-binding protein (ModA).

It localises to the cell inner membrane. The enzyme catalyses molybdate(out) + ATP + H2O = molybdate(in) + ADP + phosphate + H(+). Functionally, part of the ABC transporter complex ModABC involved in molybdenum import. Responsible for energy coupling to the transport system. This chain is Molybdenum import ATP-binding protein ModC, found in Yersinia pseudotuberculosis serotype I (strain IP32953).